We begin with the raw amino-acid sequence, 174 residues long: MIDSDGFRANVGIIICNRYGQVMWARRFGQHSWQFPQGGVDDGETAEEAMYRELYEEVGLRPEHVTILTSTRSWLRYRLPKRLVRQDSKPVCIGQKQKWFLLQLKSQDSAINLSSSGHPEFDDWRWVSYWYPVRQVVSFKRDVYRKVMKEFAVTALSFQTQEIPRKRVRQRTTG.

The Nudix hydrolase domain occupies 6–149 (GFRANVGIII…KRDVYRKVMK (144 aa)). Residues 38–59 (GGVDDGETAEEAMYRELYEEVG) carry the Nudix box motif.

It belongs to the Nudix hydrolase family. RppH subfamily. It depends on a divalent metal cation as a cofactor.

Functionally, accelerates the degradation of transcripts by removing pyrophosphate from the 5'-end of triphosphorylated RNA, leading to a more labile monophosphorylated state that can stimulate subsequent ribonuclease cleavage. This chain is RNA pyrophosphohydrolase, found in Shewanella sp. (strain MR-7).